The following is a 139-amino-acid chain: Small ribosomal subunit protein uS9 (139 aa).

Belongs to the universal ribosomal protein uS9 family.

This chain is Small ribosomal subunit protein uS9, found in Coxiella burnetii (strain CbuG_Q212) (Coxiella burnetii (strain Q212)).